We begin with the raw amino-acid sequence, 190 residues long: Secreted isochorismatase effector Isc1 (190 aa).

Residues D26, K100, and C133 contribute to the active site.

The protein belongs to the isochorismatase family.

Its subcellular location is the secreted. The protein localises to the host cytoplasm. It localises to the host nucleus. The catalysed reaction is isochorismate + H2O = (2S,3S)-2,3-dihydroxy-2,3-dihydrobenzoate + pyruvate. Secreted isochorismatase required for full virulence of V.dahliae. Suppresses salicylate-mediated innate immunity of the host by disrupting the plant salicylate metabolism pathway via hydrolysis of its isochorismate precursor. This Verticillium dahliae (strain VdLs.17 / ATCC MYA-4575 / FGSC 10137) (Verticillium wilt) protein is Secreted isochorismatase effector Isc1.